Here is a 329-residue protein sequence, read N- to C-terminus: Adenylate isopentenyltransferase (329 aa).

Residues 37–44 (GATGTGKS), lysine 63, threonine 74, 129–131 (SNS), 220–222 (KAI), and lysine 313 each bind ATP.

Belongs to the IPP transferase family. The cofactor is Mg(2+). Expressed in roots, stems, leaves and cones.

It carries out the reaction dimethylallyl diphosphate + AMP = N(6)-(dimethylallyl)adenosine 5'-phosphate + diphosphate. The catalysed reaction is dimethylallyl diphosphate + ADP = N(6)-(dimethylallyl)adenosine 5'-diphosphate + diphosphate. The enzyme catalyses dimethylallyl diphosphate + ATP = N(6)-(dimethylallyl)adenosine 5'-triphosphate + diphosphate. In terms of biological role, involved in cytokinin biosynthesis. Catalyzes the transfer of an isopentenyl group from dimethylallyl diphosphate (DMAPP) to ATP, ADP and AMP. GMP, IMP, CMP or UMP are not used as substrates. The protein is Adenylate isopentenyltransferase of Humulus lupulus (European hop).